Reading from the N-terminus, the 453-residue chain is MYQRALLFSALATAVSAQQVGTQKAEVHPALTWQKCTAAGSCTDQKGSVVIDANWRWLHSTEDTTNCYTGNEWNAELCPDNEACAKNCALDGADYSGTYGVTADGSSLKLNFVTSANVGSRLYLMEDDETYQMFNLLNNEFTFDVDVSNLPCGLNGALYFVSMDADGGLSKYPGNKAGAKYGTGYCDSQCPRDLKFINGEANVEGWKPSDNDKNAGVGGYGSCCPEMDIWEANSISTAYTPHPCDGMEQTRCDGNDCGGTYSSTRYAGTCDPDGCDFNSFRMGNESFYGPGGLVDTKSPITVVTQFVTAGGTDSGALKEIRRVYVQGGKVIGNSASNVAGVEGDSITSDFCTAQKKAFGDEDIFSKHGGLEGMGKALNKMALIVSIWDDHASSMMWLDSTYPVDADASTPGVARGTCEHGLGDPETVESQHPDASVTFSNIKFGPIGSTYKSV.

The N-terminal stretch at 1-17 is a signal peptide; it reads MYQRALLFSALATAVSA. The Nucleophile role is filled by Glu-226. The active-site Proton donor is the Glu-231. A glycan (N-linked (GlcNAc...) asparagine) is linked at Asn-284.

This sequence belongs to the glycosyl hydrolase 7 (cellulase C) family.

Its subcellular location is the secreted. It carries out the reaction Hydrolysis of (1-&gt;4)-beta-D-glucosidic linkages in cellulose and cellotetraose, releasing cellobiose from the non-reducing ends of the chains.. In terms of biological role, the biological conversion of cellulose to glucose generally requires three types of hydrolytic enzymes: (1) Endoglucanases which cut internal beta-1,4-glucosidic bonds; (2) Exocellobiohydrolases that cut the disaccharide cellobiose from the non-reducing end of the cellulose polymer chain; (3) Beta-1,4-glucosidases which hydrolyze the cellobiose and other short cello-oligosaccharides to glucose. In Aspergillus clavatus (strain ATCC 1007 / CBS 513.65 / DSM 816 / NCTC 3887 / NRRL 1 / QM 1276 / 107), this protein is Probable 1,4-beta-D-glucan cellobiohydrolase A (cbhA).